The sequence spans 351 residues: Glycerol-1-phosphate dehydrogenase [NAD(P)+] (351 aa).

Residues 97–101 (GKTID) and 119–122 (TAPS) contribute to the NAD(+) site. Asp-124 contributes to the substrate binding site. Ser-128 lines the NAD(+) pocket. Asp-171 lines the substrate pocket. Residues Asp-171 and His-251 each contribute to the Zn(2+) site. Substrate is bound at residue His-255. Position 267 (His-267) interacts with Zn(2+).

This sequence belongs to the glycerol-1-phosphate dehydrogenase family. In terms of assembly, homodimer. The cofactor is Zn(2+).

The protein resides in the cytoplasm. It carries out the reaction sn-glycerol 1-phosphate + NAD(+) = dihydroxyacetone phosphate + NADH + H(+). The catalysed reaction is sn-glycerol 1-phosphate + NADP(+) = dihydroxyacetone phosphate + NADPH + H(+). It functions in the pathway membrane lipid metabolism; glycerophospholipid metabolism. Functionally, catalyzes the NAD(P)H-dependent reduction of dihydroxyacetonephosphate (DHAP or glycerone phosphate) to glycerol 1-phosphate (G1P). The G1P thus generated is used as the glycerophosphate backbone of phospholipids in the cellular membranes of Archaea. This chain is Glycerol-1-phosphate dehydrogenase [NAD(P)+], found in Metallosphaera sedula (strain ATCC 51363 / DSM 5348 / JCM 9185 / NBRC 15509 / TH2).